Consider the following 714-residue polypeptide: Calpain-1 catalytic subunit (714 aa).

N-acetylserine is present on Ser-2. The region spanning 55-354 is the Calpain catalytic domain; sequence LFRDEAFPPV…FTRLEICNLT (300 aa). Ca(2+) contacts are provided by Gln-109 and Asp-114. Active-site residues include Cys-115, His-272, and Asn-296. Ca(2+) is bound by residues Asn-316, Asp-318, and Asp-323. Thr-354 carries the phosphothreonine modification. The tract at residues 355-526 is domain III; sequence PDALKSRTIR…KSAGTVELDD (172 aa). The tract at residues 527–542 is linker; the sequence is QIQANLPDEQVLSEEE. 4 consecutive EF-hand domains span residues 541–576, 585–618, 615–650, and 680–714; these read EEIDENFKALFRQLAGEDMEISVKELRTILNRIISK, FSLESCRSMVNLMDRDGNGKLGLVEFNILWNRIR, NRIRNYLSIFRKFDLDKSGSMSAYEMRMAIESAGFK, and VRLETMFRFFKTLDTDLDGVVTFDLFKWLQLTMFA. Residues 543-713 are domain IV; the sequence is IDENFKALFR…LFKWLQLTMF (171 aa). 10 residues coordinate Ca(2+): Asp-598, Asp-600, Asn-602, Lys-604, Glu-609, Asp-628, Asp-630, Ser-632, Ser-634, and Glu-639.

It belongs to the peptidase C2 family. Forms a heterodimer with a small (regulatory) subunit CAPNS1. Ca(2+) serves as cofactor. Post-translationally, undergoes calcium-induced successive autoproteolytic cleavages that generate a membrane-bound 78 kDa active form and an intracellular 75 kDa active form. Calpastatin reduces with high efficiency the transition from 78 kDa to 75 kDa calpain forms. As to expression, ubiquitous.

The protein resides in the cytoplasm. It is found in the cell membrane. It catalyses the reaction Broad endopeptidase specificity.. Its activity is regulated as follows. Activated by micromolar concentrations of calcium and inhibited by calpastatin. Calcium-regulated non-lysosomal thiol-protease which catalyzes limited proteolysis of substrates involved in cytoskeletal remodeling and signal transduction. Proteolytically cleaves CTBP1 at 'Asn-375', 'Gly-387' and 'His-409'. Cleaves and activates caspase-7 (CASP7). This chain is Calpain-1 catalytic subunit, found in Homo sapiens (Human).